The primary structure comprises 365 residues: Protein-glutamate methylesterase/protein-glutamine glutaminase 2 (365 aa).

In terms of domain architecture, Response regulatory spans 18-135 (RVLIVDDSAM…GQGLPAIMRD (118 aa)). A 4-aspartylphosphate modification is found at aspartate 69. One can recognise a CheB-type methylesterase domain in the interval 162–355 (GASEDWIHAL…ARMMLAAAAD (194 aa)). Residues serine 174, histidine 200, and aspartate 297 contribute to the active site.

It belongs to the CheB family. In terms of processing, phosphorylated by CheA. Phosphorylation of the N-terminal regulatory domain activates the methylesterase activity.

It localises to the cytoplasm. The enzyme catalyses [protein]-L-glutamate 5-O-methyl ester + H2O = L-glutamyl-[protein] + methanol + H(+). The catalysed reaction is L-glutaminyl-[protein] + H2O = L-glutamyl-[protein] + NH4(+). Its function is as follows. Involved in chemotaxis. Part of a chemotaxis signal transduction system that modulates chemotaxis in response to various stimuli. Catalyzes the demethylation of specific methylglutamate residues introduced into the chemoreceptors (methyl-accepting chemotaxis proteins or MCP) by CheR. Also mediates the irreversible deamidation of specific glutamine residues to glutamic acid. The polypeptide is Protein-glutamate methylesterase/protein-glutamine glutaminase 2 (Cereibacter sphaeroides (strain ATCC 17023 / DSM 158 / JCM 6121 / CCUG 31486 / LMG 2827 / NBRC 12203 / NCIMB 8253 / ATH 2.4.1.) (Rhodobacter sphaeroides)).